Here is a 243-residue protein sequence, read N- to C-terminus: Terpene cyclase paxB (243 aa).

7 consecutive transmembrane segments (helical) span residues 23 to 43, 49 to 69, 78 to 98, 112 to 132, 134 to 154, 172 to 194, and 205 to 225; these read FVVGMGVGWIINYIGMVYISF, GMSIMPLCCNIAWELVYCLVF, GVFWMGLLINFGVMYAAITFS, ISLIFFVATMGFLSGHVALAL, IGPALAYSWGAVICQLLLSVG, LWASRFLGSTCTVGFAGLRWMYW, and LVLWSLVVFLSIDGFYGICFW.

This sequence belongs to the paxB family.

Its subcellular location is the membrane. It participates in secondary metabolite biosynthesis. In terms of biological role, terpene cyclase; part of the ATM2 gene cluster that mediates the biosynthesis of paxilline, a mycotoxin that acts as an inhibitor of mammalian maxi-K channels. PaxG, the geranylgeranyl diphosphate (GGPP) synthase is proposed to catalyze the first step in paxilline biosynthesis. Condensation of indole-3-glycerol phosphate with GGPP by paxC then forms 3-geranylgeranylindole (3-GGI), followed by epoxidation and cyclization of this intermediate (by paxM and paxB) to form paspaline. Paspaline is subsequently converted to 13-desoxypaxilline by paxP, the latter being then converted to paxilline by paxQ. Finally paxilline can be mono- and di-prenylated by paxD. The chain is Terpene cyclase paxB from Penicillium paxilli.